The primary structure comprises 95 residues: NELL2-interacting cell ontogeny regulator 1 (95 aa).

The first 34 residues, 1–34 (MAPPPACRSPMSPPPPPLLLLLLSLALLGARARA), serve as a signal peptide directing secretion.

Belongs to the NICOL family. As to quaternary structure, interacts with NELL2; triggers epididymal differentiation. Interacts with cell surface receptor TFRC; the interaction mediates uptake of NICOL1 into fibroblasts. In terms of tissue distribution, detected in the brain (at protein level). Also expressed at low levels in the kidney, primarily in tubular epithelial cells.

It localises to the secreted. It is found in the cytoplasm. The protein resides in the perinuclear region. In terms of biological role, mRNA-binding protein which interacts with a range of target mRNAs including SERPINE1, ACTA2, CCN2 and COL4A1 and may promote extracellular matrix production. Binds to the 3'-UTR of SERPINE1 mRNA and stabilizes the mRNA, possibly by competing for binding with SERBP1 and preventing SERBP1-mediated mRNA degradation. Also binds to the 3'-UTR of ACTA2. Testis-derived lumicrine factor that triggers epididymal differentiation and sperm maturation. In Homo sapiens (Human), this protein is NELL2-interacting cell ontogeny regulator 1.